We begin with the raw amino-acid sequence, 347 residues long: Ataxin-7-like protein 3 (347 aa).

The SGF11-type zinc-finger motif lies at 84–105 (CVCPNCSRSIAASRFAPHLEKC). The segment covering 116 to 125 (ANRRIANSNN) has biased composition (low complexity). The interval 116 to 184 (ANRRIANSNN…GELSNSDPFK (69 aa)) is disordered. Residues serine 129 and serine 131 each carry the phosphoserine modification. Over residues 132-141 (DQEDNDDIND) the composition is skewed to acidic residues. The region spanning 196-263 (LGPEELRSLL…SLDNDSFDMT (68 aa)) is the SCA7 domain. Residues 275–288 (DGSSDLSPSDSGSS) are compositionally biased toward low complexity. Positions 275–347 (DGSSDLSPSD…PTPSIYDDIN (73 aa)) are disordered. Phosphoserine is present on residues serine 278, serine 281, and serine 326.

It belongs to the SGF11 family. In terms of assembly, component of some SAGA transcription coactivator-HAT complexes, at least composed of ATXN7, ATXN7L3, ENY2, GCN5L2, SUPT3H, TAF10, TRRAP and USP22. Within the SAGA complex, ENY2, ATXN7, ATXN7L3, and USP22 form an additional subcomplex of SAGA called the DUB module (deubiquitination module). Interacts directly with ENY2 and USP22.

It localises to the nucleus. Its function is as follows. Component of the transcription regulatory histone acetylation (HAT) complex SAGA, a multiprotein complex that activates transcription by remodeling chromatin and mediating histone acetylation and deubiquitination. Within the SAGA complex, participates in a subcomplex that specifically deubiquitinates both histones H2A and H2B. The SAGA complex is recruited to specific gene promoters by activators such as MYC, where it is required for transcription. Required for nuclear receptor-mediated transactivation. Within the complex, it is required to recruit USP22 and ENY2 into the SAGA complex. Regulates H2B monoubiquitination (H2Bub1) levels. Affects subcellular distribution of ENY2, USP22 and ATXN7L3B. The protein is Ataxin-7-like protein 3 of Homo sapiens (Human).